The chain runs to 493 residues: Probable malate:quinone oxidoreductase (493 aa).

The protein belongs to the MQO family. FAD serves as cofactor.

It catalyses the reaction (S)-malate + a quinone = a quinol + oxaloacetate. It functions in the pathway carbohydrate metabolism; tricarboxylic acid cycle; oxaloacetate from (S)-malate (quinone route): step 1/1. This is Probable malate:quinone oxidoreductase from Mycobacterium marinum (strain ATCC BAA-535 / M).